Reading from the N-terminus, the 1966-residue chain is Histone-lysine N-methyltransferase SETD1B (1966 aa).

Residues 1 to 12 show a composition bias toward basic residues; the sequence is MENSHPPHHHHQ. Residues 1–26 form a disordered region; the sequence is MENSHPPHHHHQQPPPQPGPSGERRN. The segment at 68-98 is interaction with WDR82; sequence VEDPRVVGIWTKNKELELSVPKFKIDEFYVG. One can recognise an RRM domain in the interval 93-181; sequence DEFYVGPVPP…NIIHVELDTK (89 aa). Disordered stretches follow at residues 235–302, 357–660, 675–719, 963–1462, 1501–1541, 1555–1606, and 1636–1668; these read GCGS…LFSQ, VGGT…PKPM, LAPT…PPPA, KVKR…SGPL, PPLL…RPPA, QPQT…KLPF, and AKSR…PQPL. Polar residues-rich tracts occupy residues 243 to 259, 265 to 274, and 282 to 300; these read VTPN…TAYS, TPNSYGQGTP, and PFSQ…SYLF. 2 stretches are compositionally biased toward pro residues: residues 432–441 and 449–458; these read PAPPPLPPAE and GTPPGPPPPD. Residues 493 to 521 are compositionally biased toward basic and acidic residues; it reads EKPHDSLDSRIEMLLKEQRTKLLFLREPD. Positions 531 to 543 are enriched in low complexity; the sequence is SPISSSSSQLSPL. A compositionally biased stretch (pro residues) spans 592 to 603; it reads PRPPPEPGPPDP. The span at 637–646 shows a compositional bias: acidic residues; the sequence is EDMEISDDEM. Residues 679–719 show a composition bias toward pro residues; it reads LPLPPPPGFPPLPPPPPPPPPQPGFPMPPPLPPPPPPPPPA. Phosphoserine occurs at positions 986 and 994. Residues 995 to 1015 are compositionally biased toward basic and acidic residues; it reads ERERDRDMADTPCELAKRDPK. A Phosphoserine modification is found at Ser1031. Over residues 1041–1064 the composition is skewed to low complexity; it reads LSASSSSSASSSSGSSTTSPSSSA. Acidic residues-rich tracts occupy residues 1067 to 1087 and 1104 to 1142; these read KEEE…EEEE and KDDD…EEET. The span at 1148 to 1174 shows a compositional bias: low complexity; the sequence is SKAEATSSSESSESSEFESSSESSPSS. Residues 1173–1204 adopt a coiled-coil conformation; the sequence is SSSEDEEEVVAREEEEEEEEEEMVAEESMASA. Composition is skewed to acidic residues over residues 1175 to 1197 and 1229 to 1238; these read SEDE…EMVA and GMEEEVDIET. Phosphoserine is present on residues Ser1265, Ser1283, and Ser1335. Residues 1312 to 1340 show a composition bias toward pro residues; sequence EPPMMLPLPLQPPLPPPRPPRPPSPPPEP. The segment covering 1383 to 1425 has biased composition (low complexity); sequence PGGEPPLSGGSSGLSLSSPQVPGSPFSYPAPSPSLSSGGLPRT. A compositionally biased stretch (pro residues) spans 1501–1514; that stretch reads PPLLPAPLASCPPP. Positions 1515 to 1524 are enriched in basic residues; the sequence is MKRKPGRPRR. The span at 1580 to 1600 shows a compositional bias: pro residues; that stretch reads PAPPPPLPPQPPPPPPPPPVE. Phosphoserine is present on residues Ser1659 and Ser1663. The WDR5 interaction motif (WIN) signature appears at 1745–1750; the sequence is GCARSE. The segment at 1767-1800 is disordered; the sequence is SRASTDEPPADTQGMSIPAQPHASTRAGSERRSE. The RxxxRR motif motif lies at 1798–1803; it reads RSEQRR. Residues 1827–1944 enclose the SET domain; the sequence is KKLKFCKSHI…VNEEITYDYK (118 aa). Tyr1943 serves as a coordination point for S-adenosyl-L-methionine. Positions 1950-1966 constitute a Post-SET domain; it reads VKIPCLCGSENCRGTLN.

This sequence belongs to the class V-like SAM-binding methyltransferase superfamily. In terms of assembly, component of the SET1B/COMPASS complex composed of the catalytic subunit SETD1B, WDR5, WDR82, RBBP5, ASH2L/ASH2, CXXC1/CFP1, HCFC1, DPY30 homotrimer and BOD1. Forms a core complex with the evolutionary conserved subcomplex WRAD composed of WDR5, RBBP5, ASH2L/ASH2 and DPY30 subunits; WRAD differentially stimulates the methyltransferase activity. Interacts with HCFC1 and ASH2L/ASH2. Interacts (via N-terminal region) with WDR82. Interacts (via the RRM domain) with hyperphosphorylated C-terminal domain (CTD) of RNA polymerase II large subunit (POLR2A) only in the presence of WDR82. Binds specifically to CTD heptad repeats phosphorylated on 'Ser-5' of each heptad. Interacts with RBM15. Interacts (via WIN motif) with WDR5.

The protein localises to the nucleus. The protein resides in the nucleus speckle. Its subcellular location is the chromosome. It is found in the cytoplasm. The catalysed reaction is L-lysyl(4)-[histone H3] + S-adenosyl-L-methionine = N(6)-methyl-L-lysyl(4)-[histone H3] + S-adenosyl-L-homocysteine + H(+). The enzyme catalyses N(6)-methyl-L-lysyl(4)-[histone H3] + S-adenosyl-L-methionine = N(6),N(6)-dimethyl-L-lysyl(4)-[histone H3] + S-adenosyl-L-homocysteine + H(+). It catalyses the reaction N(6),N(6)-dimethyl-L-lysyl(4)-[histone H3] + S-adenosyl-L-methionine = N(6),N(6),N(6)-trimethyl-L-lysyl(4)-[histone H3] + S-adenosyl-L-homocysteine + H(+). Functionally, histone methyltransferase that catalyzes methyl group transfer from S-adenosyl-L-methionine to the epsilon-amino group of 'Lys-4' of histone H3 (H3K4) via a non-processive mechanism. Part of chromatin remodeling machinery, forms H3K4me1, H3K4me2 and H3K4me3 methylation marks at active chromatin sites where transcription and DNA repair take place. Plays an essential role in regulating the transcriptional programming of multipotent hematopoietic progenitor cells and lymphoid lineage specification during hematopoiesis. This chain is Histone-lysine N-methyltransferase SETD1B (SETD1B), found in Homo sapiens (Human).